The sequence spans 187 residues: Pre-mRNA-splicing factor cwf7 (187 aa).

The protein belongs to the SPF27 family. In terms of assembly, belongs to the 40S cdc5-associated complex (or cwf complex), a spliceosome sub-complex reminiscent of a late-stage spliceosome composed of the U2, U5 and U6 snRNAs and at least brr2, cdc5, cwf2/prp3, cwf3/syf1, cwf4/syf3, cwf5/ecm2, spp42/cwf6, cwf7/spf27, cwf8, cwf9, cwf10, cwf11, cwf12, prp45/cwf13, cwf14, cwf15, cwf16, cwf17, cwf18, cwf19, cwf20, cwf21, cwf22, cwf23, cwf24, cwf25, cwf26, cyp7/cwf27, cwf28, cwf29/ist3, lea1, msl1, prp5/cwf1, prp10, prp12/sap130, prp17, prp22, sap61, sap62, sap114, sap145, slu7, smb1, smd1, smd3, smf1, smg1 and syf2.

The protein localises to the nucleus. Involved in mRNA splicing. The sequence is that of Pre-mRNA-splicing factor cwf7 (cwf7) from Schizosaccharomyces pombe (strain 972 / ATCC 24843) (Fission yeast).